A 618-amino-acid chain; its full sequence is DNA mismatch repair protein MutL (618 aa).

The protein belongs to the DNA mismatch repair MutL/HexB family.

Functionally, this protein is involved in the repair of mismatches in DNA. It is required for dam-dependent methyl-directed DNA mismatch repair. May act as a 'molecular matchmaker', a protein that promotes the formation of a stable complex between two or more DNA-binding proteins in an ATP-dependent manner without itself being part of a final effector complex. The chain is DNA mismatch repair protein MutL from Porphyromonas gingivalis (strain ATCC BAA-308 / W83).